The sequence spans 403 residues: NADH-quinone oxidoreductase subunit D (403 aa).

It belongs to the complex I 49 kDa subunit family. In terms of assembly, NDH-1 is composed of 14 different subunits. Subunits NuoB, C, D, E, F, and G constitute the peripheral sector of the complex.

It localises to the cell membrane. It catalyses the reaction a quinone + NADH + 5 H(+)(in) = a quinol + NAD(+) + 4 H(+)(out). Functionally, NDH-1 shuttles electrons from NADH, via FMN and iron-sulfur (Fe-S) centers, to quinones in the respiratory chain. The immediate electron acceptor for the enzyme in this species is believed to be a menaquinone. Couples the redox reaction to proton translocation (for every two electrons transferred, four hydrogen ions are translocated across the cytoplasmic membrane), and thus conserves the redox energy in a proton gradient. The protein is NADH-quinone oxidoreductase subunit D of Amoebophilus asiaticus (strain 5a2).